The sequence spans 430 residues: uncharacterized protein (430 aa).

The next 12 helical transmembrane spans lie at 18–38 (LFLLTIGGLYSLGIALSNTFV), 49–69 (FIDLAIYNLSIVTMQPITFYL), 80–100 (VFILRFGVIFLAAFYLSVLLA), 109–129 (VLIGAVLGVGYGFYWLAFNVL), 145–165 (FMGILSSSAGMIGPIVAGFVI), 175–195 (TVIFSLSLSLFALAVVMSFFL), 235–255 (IFVFLISVFVFIETNSELALG), 256–276 (TFGLVNSAVSFFAYYFASRLI), 285–305 (ILLGGLILYGALFLILFHMSF), 307–327 (TLLTYGVFIAIGYPLLLVPYV), 353–373 (MFLNAGRIVSILCFLLIVALL), and 377–397 (VGIPLSLAILGIGHPLIYYFV). Positions 407-430 (GENETMEEDGQKRVTEPTLLKGER) are disordered. Positions 415 to 430 (DGQKRVTEPTLLKGER) are enriched in basic and acidic residues.

It is found in the cell membrane. This is an uncharacterized protein from Bacillus subtilis (strain 168).